The primary structure comprises 543 residues: Dipeptide-binding protein DppE (543 aa).

Residues 1–22 form the signal peptide; sequence MKRVKKLWGMGLALGLSFALMG. Cysteine 23 carries the N-palmitoyl cysteine lipid modification. Residue cysteine 23 is the site of S-diacylglycerol cysteine attachment.

Belongs to the bacterial solute-binding protein 5 family.

The protein resides in the cell membrane. Probably part of the ABC transporter DppBCDE involved in dipeptide transport. This is Dipeptide-binding protein DppE (dppE) from Bacillus subtilis (strain 168).